We begin with the raw amino-acid sequence, 439 residues long: Glutamate--tRNA ligase 2 (439 aa).

The 'HIGH' region motif lies at 9-19; the sequence is PSPTGHLHVGN. Positions 233 to 237 match the 'KMSKS' region motif; that stretch reads KLSKR. Lys236 is a binding site for ATP.

It belongs to the class-I aminoacyl-tRNA synthetase family. Glutamate--tRNA ligase type 1 subfamily. In terms of assembly, monomer.

The protein resides in the cytoplasm. The enzyme catalyses tRNA(Glu) + L-glutamate + ATP = L-glutamyl-tRNA(Glu) + AMP + diphosphate. Its function is as follows. Catalyzes the attachment of glutamate to tRNA(Glu) in a two-step reaction: glutamate is first activated by ATP to form Glu-AMP and then transferred to the acceptor end of tRNA(Glu). The protein is Glutamate--tRNA ligase 2 of Sphingopyxis alaskensis (strain DSM 13593 / LMG 18877 / RB2256) (Sphingomonas alaskensis).